Here is a 168-residue protein sequence, read N- to C-terminus: MSNENLSPNSSNPDLTKLNNGESGTIDTSKFSPNEMKLYKMYGKLPSKKDIFKHTMQKRKYFDSGDYALQKAGIQNNDPINYGKNNLPLTNPSKLREDIIKRRISTCPSTASTAGVVDNATLIQKEGSISSGPPSSNNGTIGGGSTSSTPVGNHSSSSSSLYTESPIR.

Low complexity predominate over residues methionine 1–proline 13. A disordered region spans residues methionine 1–phenylalanine 31. The span at lysine 17–phenylalanine 31 shows a compositional bias: polar residues. Phosphoserine is present on residues serine 32 and serine 64. The interval lysine 125–arginine 168 is disordered. Composition is skewed to low complexity over residues glycine 127–glycine 139 and threonine 146–arginine 168.

The protein belongs to the endosulfine family. As to quaternary structure, interacts with RIM15, DHH1, PBP1, PBP4 and LSM12. Post-translationally, phosphorylated at Ser-64 by RIM15.

In terms of biological role, required for TORC1 to properly control gene expression and chronological life span. Plays an essential role in initiation of the G0 program by preventing the degradation of specific nutrient-regulated mRNAs via the 5'-3' mRNA decay pathway. This chain is mRNA stability protein IGO1 (IGO1), found in Saccharomyces cerevisiae (strain ATCC 204508 / S288c) (Baker's yeast).